Consider the following 217-residue polypeptide: MASLKSIIRQGKQTRSDLKQLRKSGKVPAVVYGYGTKNVSVKVDEVEFIKVIREVGRNGVIELGVGSKTIKVMVADYQFDPLKNQITHIDFLAINMSEERTVEVPVQLVGEAVGAKEGGVVEQPLFNLEVTATPDNIPEAIEVDITELNINDSLTVADVKVTGDFKIENDSAESVVTVVAPTEEPTEEEIEAMEGEQQTEEPEVVGESKEDEEKTEE.

Positions 178-217 (VVAPTEEPTEEEIEAMEGEQQTEEPEVVGESKEDEEKTEE) are disordered. A compositionally biased stretch (acidic residues) spans 184–205 (EPTEEEIEAMEGEQQTEEPEVV). A compositionally biased stretch (basic and acidic residues) spans 206–217 (GESKEDEEKTEE).

Belongs to the bacterial ribosomal protein bL25 family. CTC subfamily. As to quaternary structure, part of the 50S ribosomal subunit; part of the 5S rRNA/L5/L18/L25 subcomplex. Contacts the 5S rRNA. Binds to the 5S rRNA independently of L5 and L18.

In terms of biological role, this is one of the proteins that binds to the 5S RNA in the ribosome where it forms part of the central protuberance. In Staphylococcus aureus (strain USA300), this protein is Large ribosomal subunit protein bL25.